The primary structure comprises 374 residues: Alcohol dehydrogenase 1 (374 aa).

Position 1 is an N-acetylserine (Ser1). Residues Cys46, His67, Cys97, Cys100, Cys103, Cys111, and Cys174 each coordinate Zn(2+). Residues 199–204 (GLGGVG), Asp223, Lys228, 292–294 (VGV), and Arg369 each bind NAD(+).

Belongs to the zinc-containing alcohol dehydrogenase family. Class-I subfamily. Zn(2+) serves as cofactor.

The protein resides in the cytoplasm. The catalysed reaction is a primary alcohol + NAD(+) = an aldehyde + NADH + H(+). It catalyses the reaction a secondary alcohol + NAD(+) = a ketone + NADH + H(+). In Alligator mississippiensis (American alligator), this protein is Alcohol dehydrogenase 1.